Reading from the N-terminus, the 154-residue chain is Endoribonuclease YbeY (154 aa).

Residues His113, His117, and His123 each contribute to the Zn(2+) site.

The protein belongs to the endoribonuclease YbeY family. Zn(2+) is required as a cofactor.

Its subcellular location is the cytoplasm. Functionally, single strand-specific metallo-endoribonuclease involved in late-stage 70S ribosome quality control and in maturation of the 3' terminus of the 16S rRNA. This chain is Endoribonuclease YbeY, found in Vibrio vulnificus (strain YJ016).